Consider the following 347-residue polypeptide: MKQTIILLYGGRSAEREVSVLSAESVMRAVDYDRFTVKTFFISQSGDFIKTQEFSHAPGQEDRLMTNETIDWDKKVAPSAIYEEGAVVFPVLHGPMGEDGSVQGFLEVLKMPYVGCNILSSSLAMDKITTKRVLESAGIAQVPYVAIVEGDDVTAKIAEVEEKLAYPVFTKPSNMGSSVGISKSENQEELRQALKLAFRYDSRVLVEQGVNAREIEVGLLGNYDVKSTLPGEVVKDVAFYDYDAKYIDNKVTMDIPAKISDDVVAVMRQNAETAFRAIGGLGLSRCDFFYTDKGEIFLNELNTMPGFTQWSMYPLLWENMGISYPELIERLVDLAKESFDKREAHLI.

Residues 131–333 form the ATP-grasp domain; the sequence is KRVLESAGIA…YPELIERLVD (203 aa). 161–216 is an ATP binding site; that stretch reads EEKLAYPVFTKPSNMGSSVGISKSENQEELRQALKLAFRYDSRVLVEQGVNAREIE. Residues Asp-287, Glu-300, and Asn-302 each coordinate Mg(2+).

The protein belongs to the D-alanine--D-alanine ligase family. The cofactor is Mg(2+). Mn(2+) serves as cofactor.

Its subcellular location is the cytoplasm. The enzyme catalyses 2 D-alanine + ATP = D-alanyl-D-alanine + ADP + phosphate + H(+). The protein operates within cell wall biogenesis; peptidoglycan biosynthesis. In terms of biological role, cell wall formation. The sequence is that of D-alanine--D-alanine ligase from Streptococcus pneumoniae (strain ATCC BAA-255 / R6).